The sequence spans 397 residues: LIM/homeobox protein Lhx9 (397 aa).

LIM zinc-binding domains follow at residues 69-130 (ALCA…RFSV) and 131-193 (QRCA…LLQG). Disordered stretches follow at residues 248–272 (ENEA…RMRT), 330–365 (ENGG…LTDL), and 378–397 (SNMD…TNLF). Positions 267-326 (TKRMRTSFKHHQLRTMKSYFAINHNPDAKDLKQLAQKTGLTKRVLQVWFQNARAKFRRNL) form a DNA-binding region, homeobox. Positions 353–365 (LTPPGTATTLTDL) are enriched in low complexity. Residues 387–397 (SPSQTTLTNLF) show a composition bias toward polar residues.

In terms of assembly, interacts with LDB1 and LDB2. In terms of tissue distribution, expressed in the dorsal thalamus and inner nuclei of the cerebellum.

The protein resides in the nucleus. In terms of biological role, involved in gonadal development. The chain is LIM/homeobox protein Lhx9 (Lhx9) from Mus musculus (Mouse).